A 409-amino-acid chain; its full sequence is Argininosuccinate synthase (409 aa).

ATP is bound by residues 16–24 (AYSGGLDTS) and alanine 44. L-citrulline-binding residues include tyrosine 96 and serine 101. Residue glycine 126 participates in ATP binding. Positions 128, 132, and 133 each coordinate L-aspartate. Asparagine 132 provides a ligand contact to L-citrulline. Positions 136, 185, 194, 270, and 282 each coordinate L-citrulline.

The protein belongs to the argininosuccinate synthase family. Type 1 subfamily. In terms of assembly, homotetramer.

It is found in the cytoplasm. It catalyses the reaction L-citrulline + L-aspartate + ATP = 2-(N(omega)-L-arginino)succinate + AMP + diphosphate + H(+). It functions in the pathway amino-acid biosynthesis; L-arginine biosynthesis; L-arginine from L-ornithine and carbamoyl phosphate: step 2/3. The chain is Argininosuccinate synthase from Shewanella piezotolerans (strain WP3 / JCM 13877).